Consider the following 206-residue polypeptide: Small ribosomal subunit protein uS4 (206 aa).

The S4 RNA-binding domain occupies 96-156 (SRLDNVVYRM…EKSKKQVRIA (61 aa)).

The protein belongs to the universal ribosomal protein uS4 family. As to quaternary structure, part of the 30S ribosomal subunit. Contacts protein S5. The interaction surface between S4 and S5 is involved in control of translational fidelity.

Its function is as follows. One of the primary rRNA binding proteins, it binds directly to 16S rRNA where it nucleates assembly of the body of the 30S subunit. Functionally, with S5 and S12 plays an important role in translational accuracy. This is Small ribosomal subunit protein uS4 from Laribacter hongkongensis (strain HLHK9).